A 227-amino-acid polypeptide reads, in one-letter code: PKHD-type hydroxylase Neut_0373 (227 aa).

Residues 78-179 (KIMPPFFNRY…RIACFMFIQS (102 aa)) form the Fe2OG dioxygenase domain. 3 residues coordinate Fe cation: H97, D99, and H160. R170 is a 2-oxoglutarate binding site.

Requires Fe(2+) as cofactor. L-ascorbate serves as cofactor.

This Nitrosomonas eutropha (strain DSM 101675 / C91 / Nm57) protein is PKHD-type hydroxylase Neut_0373.